The following is a 955-amino-acid chain: MVIGTPVTTPLSKIVRTPSRVPGSRRTTPSKIREEKILVTIRVRPLSPKEQAAYDLIAWDFPDEQTIVSKNLNHERHTGPYSFDYVFDPTCSTSKVYEQGARDVALSALNGINATIFAYGQTSSGKTFTMRGITESAVNDIYGRIKLTTERDFVLKFSALEIYNETVVDLLNRESVSLRLLDDPEKGVIVEKQVEEIVKDEEHLKTLIGTVEAHRQVGETALNDKSSRSHQIIRLTIESSIRENSGCVKSFLATLNLVDLAGSERASQTSADGTRLKEGSHINRSLLTVTNVIRKLSCSGGKRSGHIPYRDSKLTRILQASLGGNSRTAIICTLSPALSHLEQSRNTLCFATSAKEVTTTAQVNMVVAEKQLLKHLQKEVSRLEAELRSPDPAASPCLRSLLIEKERKIQKMEEEMNELKRQRDLAQSQLELERRSKKELKGSDHHGPSRQVVKCLSFTPEDEEVSGASLSTNLGRKSLLERQAAIRRSTNSTNPSMLVHEIRKLEMRQRQLGDEANHALQLLHKEFASHRIGSQGATETIAKLFSEIKELQKISCIPEQIEIKDKASLKEEIARLRSQESNIASLEQKLENVQRSIDELVMHLPSCHESADSRTAPSKKKRVLPFNLSNTSNIPNIIRSPCSPMSPSSCNIVEGEIENRAPPECNNVGSAGDSFCSQLSTPVKSKDDNCTPGSRQSNSVNMKKMQTMFKKAAEDNIRSIKAYVTELKERVAKLQYQKQLLVCQVLELEANEAASDEADISDQSPLSWHLVFEDQRQQIIMLWHLCHVSLVHRTQFYMLFKGDPSDQIYLEVELRRLTWLDEHLAGLGNASPALLGDDAAGYVSSSIKALKQEREYLAKRVSSKLNAEEREMLYVKWDIPPDGKQRRRLQLVNKLWSDPLNMQNVRDSAEVVAKLVGFCETGEHVSKEMFQLNFVSPSDKKTWIGWNLISNLLHL.

In terms of domain architecture, Kinesin motor spans 36–357 (KILVTIRVRP…LCFATSAKEV (322 aa)). An ATP-binding site is contributed by 120-127 (GQTSSGKT). Coiled coils occupy residues 366–443 (VVAE…LKGS) and 566–604 (KASLKEEIARLRSQESNIASLEQKLENVQRSIDELVMHL).

Belongs to the TRAFAC class myosin-kinesin ATPase superfamily. Kinesin family. KIN-7 subfamily.

It is found in the cytoplasm. The protein localises to the nucleus. It localises to the cytoskeleton. Its subcellular location is the phragmoplast. In terms of biological role, probable plus end-directed motor protein that may function in the NACK-PQR (NPK1-NQK1/MEK1-NRK1) MAP kinase signaling pathway, which is essential for somatic cell cytokinesis, especially for the cell-plate formation and its expansion. May regulate the activity and the localization of NPK1, probably by association through the non-catalytic region of the kinase. The polypeptide is Kinesin-like protein NACK2 (NACK2) (Nicotiana tabacum (Common tobacco)).